A 32-amino-acid chain; its full sequence is VFCRSNGQQCTSDGQCCYGKCMTAFMGKICMR.

3 disulfide bridges follow: Cys-3–Cys-17, Cys-10–Cys-21, and Cys-16–Cys-30.

Expressed by the venom gland.

The protein resides in the secreted. Its function is as follows. Acts as a neurotoxin. In Phoneutria nigriventer (Brazilian armed spider), this protein is U13-ctenitoxin-Pn1a.